Consider the following 273-residue polypeptide: DnaJ homolog subfamily C member 27 (273 aa).

The segment at 1–18 (METNVPKRKEPAKSLRIK) is required for interaction with MAPK1. Residues 23–30 (GNAEVGKS), 71–75 (DMAGH), and 134–137 (NKID) each bind GTP. Residues 217-273 (DSWEMLGVRPGASREEVNKAYRKLAVLLHPDKCVAPGSEDAFKAVVNARTALLKNIK) form the J domain.

Belongs to the small GTPase superfamily. Rab family. As to quaternary structure, interacts directly with MAPK1 (wild-type and kinase-deficient forms). Interacts directly (in GTP-bound form) with MAP2K1 (wild-type and kinase-deficient forms).

It is found in the nucleus. Its function is as follows. GTPase which can activate the MEK/ERK pathway and induce cell transformation when overexpressed. May act as a nuclear scaffold for MAPK1, probably by association with MAPK1 nuclear export signal leading to enhanced ERK1/ERK2 signaling. In Mus musculus (Mouse), this protein is DnaJ homolog subfamily C member 27 (Dnajc27).